The chain runs to 241 residues: Phosphoribosylaminoimidazole-succinocarboxamide synthase (241 aa).

The protein belongs to the SAICAR synthetase family.

The enzyme catalyses 5-amino-1-(5-phospho-D-ribosyl)imidazole-4-carboxylate + L-aspartate + ATP = (2S)-2-[5-amino-1-(5-phospho-beta-D-ribosyl)imidazole-4-carboxamido]succinate + ADP + phosphate + 2 H(+). It functions in the pathway purine metabolism; IMP biosynthesis via de novo pathway; 5-amino-1-(5-phospho-D-ribosyl)imidazole-4-carboxamide from 5-amino-1-(5-phospho-D-ribosyl)imidazole-4-carboxylate: step 1/2. The sequence is that of Phosphoribosylaminoimidazole-succinocarboxamide synthase (purC) from Bacillus subtilis (strain 168).